The sequence spans 457 residues: Phosphoglucosamine mutase (457 aa).

Catalysis depends on Ser-103, which acts as the Phosphoserine intermediate. Mg(2+) contacts are provided by Ser-103, Asp-245, Asp-247, and Asp-249. Ser-103 is modified (phosphoserine).

The protein belongs to the phosphohexose mutase family. The cofactor is Mg(2+). Post-translationally, activated by phosphorylation.

The catalysed reaction is alpha-D-glucosamine 1-phosphate = D-glucosamine 6-phosphate. Its function is as follows. Catalyzes the conversion of glucosamine-6-phosphate to glucosamine-1-phosphate. This Syntrophotalea carbinolica (strain DSM 2380 / NBRC 103641 / GraBd1) (Pelobacter carbinolicus) protein is Phosphoglucosamine mutase.